We begin with the raw amino-acid sequence, 407 residues long: Peptidase T (407 aa).

His78 contacts Zn(2+). The active site involves Asp80. Residue Asp139 participates in Zn(2+) binding. Glu173 acts as the Proton acceptor in catalysis. Zn(2+)-binding residues include Glu174, Asp196, and His378.

It belongs to the peptidase M20B family. Zn(2+) serves as cofactor.

The protein localises to the cytoplasm. It carries out the reaction Release of the N-terminal residue from a tripeptide.. In terms of biological role, cleaves the N-terminal amino acid of tripeptides. The sequence is that of Peptidase T from Macrococcus caseolyticus (strain JCSC5402) (Macrococcoides caseolyticum).